Here is a 212-residue protein sequence, read N- to C-terminus: 3-isopropylmalate dehydratase small subunit 2 (212 aa).

This sequence belongs to the LeuD family. LeuD type 1 subfamily. In terms of assembly, heterodimer of LeuC and LeuD.

The enzyme catalyses (2R,3S)-3-isopropylmalate = (2S)-2-isopropylmalate. The protein operates within amino-acid biosynthesis; L-leucine biosynthesis; L-leucine from 3-methyl-2-oxobutanoate: step 2/4. Functionally, catalyzes the isomerization between 2-isopropylmalate and 3-isopropylmalate, via the formation of 2-isopropylmaleate. The polypeptide is 3-isopropylmalate dehydratase small subunit 2 (Chromobacterium violaceum (strain ATCC 12472 / DSM 30191 / JCM 1249 / CCUG 213 / NBRC 12614 / NCIMB 9131 / NCTC 9757 / MK)).